A 194-amino-acid polypeptide reads, in one-letter code: Inosine triphosphate pyrophosphatase (194 aa).

An N-acetylalanine modification is found at Ala-2. 14 to 19 contributes to the ITP binding site; it reads TGNAKK. Glu-44 contributes to the Mg(2+) binding site. Residues Lys-56, 72–73, Lys-89, 149–152, Lys-172, and 177–178 each bind ITP; these read DT, FGWD, and HR.

It belongs to the HAM1 NTPase family. Homodimer. Mg(2+) serves as cofactor. Ubiquitous. Highly expressed in heart, liver, sex glands, thyroid and adrenal gland.

Its subcellular location is the cytoplasm. The enzyme catalyses ITP + H2O = IMP + diphosphate + H(+). It carries out the reaction dITP + H2O = dIMP + diphosphate + H(+). The catalysed reaction is XTP + H2O = XMP + diphosphate + H(+). It catalyses the reaction N(6)-hydroxy-dATP + H2O = N(6)-hydroxy-dAMP + diphosphate + H(+). In terms of biological role, pyrophosphatase that hydrolyzes the non-canonical purine nucleotides inosine triphosphate (ITP), deoxyinosine triphosphate (dITP) as well as 2'-deoxy-N-6-hydroxylaminopurine triphosphate (dHAPTP) and xanthosine 5'-triphosphate (XTP) to their respective monophosphate derivatives. The enzyme does not distinguish between the deoxy- and ribose forms. Probably excludes non-canonical purines from RNA and DNA precursor pools, thus preventing their incorporation into RNA and DNA and avoiding chromosomal lesions. The protein is Inosine triphosphate pyrophosphatase of Homo sapiens (Human).